Consider the following 413-residue polypeptide: Arogenate dehydratase/prephenate dehydratase 6, chloroplastic (413 aa).

The N-terminal 44 residues, methionine 1–serine 44, are a transit peptide targeting the chloroplast. The Prephenate dehydratase domain occupies arginine 117 to arginine 294. An ACT domain is found at serine 308–proline 399.

In terms of tissue distribution, expressed in roots, leaves, stems, flowers and siliques.

It localises to the plastid. Its subcellular location is the chloroplast stroma. The enzyme catalyses L-arogenate + H(+) = L-phenylalanine + CO2 + H2O. The catalysed reaction is prephenate + H(+) = 3-phenylpyruvate + CO2 + H2O. Its pathway is amino-acid biosynthesis; L-phenylalanine biosynthesis; L-phenylalanine from L-arogenate: step 1/1. It participates in amino-acid biosynthesis; L-phenylalanine biosynthesis; phenylpyruvate from prephenate: step 1/1. Functionally, converts the prephenate produced from the shikimate-chorismate pathway into phenylalanine. Dehydratase that uses arogenate and prephenate as substrates. Utilzes more efficiently arogenate than prephenate. This is Arogenate dehydratase/prephenate dehydratase 6, chloroplastic from Arabidopsis thaliana (Mouse-ear cress).